We begin with the raw amino-acid sequence, 355 residues long: Histidinol-phosphate aminotransferase (355 aa).

N6-(pyridoxal phosphate)lysine is present on K211.

It belongs to the class-II pyridoxal-phosphate-dependent aminotransferase family. Histidinol-phosphate aminotransferase subfamily. Homodimer. Pyridoxal 5'-phosphate serves as cofactor.

It carries out the reaction L-histidinol phosphate + 2-oxoglutarate = 3-(imidazol-4-yl)-2-oxopropyl phosphate + L-glutamate. The protein operates within amino-acid biosynthesis; L-histidine biosynthesis; L-histidine from 5-phospho-alpha-D-ribose 1-diphosphate: step 7/9. This chain is Histidinol-phosphate aminotransferase, found in Aeromonas salmonicida (strain A449).